The chain runs to 120 residues: MFLLHEYDIFWTFLIIASLIPILAFWISGLLAPISEGPEKLSSYESGIEPMGGAWLQFRIRYYMFALVFVVFDVETVFLYPWAMSFDVLGVSVFIEAFIFVLILVVGLVYAWRKGALEWS.

3 helical membrane-spanning segments follow: residues 9-29, 64-84, and 88-108; these read IFWTFLIIASLIPILAFWISG, MFALVFVVFDVETVFLYPWAM, and VLGVSVFIEAFIFVLILVVGL.

The protein belongs to the complex I subunit 3 family. NDH is composed of at least 16 different subunits, 5 of which are encoded in the nucleus.

Its subcellular location is the plastid. It localises to the chloroplast thylakoid membrane. It carries out the reaction a plastoquinone + NADH + (n+1) H(+)(in) = a plastoquinol + NAD(+) + n H(+)(out). The catalysed reaction is a plastoquinone + NADPH + (n+1) H(+)(in) = a plastoquinol + NADP(+) + n H(+)(out). NDH shuttles electrons from NAD(P)H:plastoquinone, via FMN and iron-sulfur (Fe-S) centers, to quinones in the photosynthetic chain and possibly in a chloroplast respiratory chain. The immediate electron acceptor for the enzyme in this species is believed to be plastoquinone. Couples the redox reaction to proton translocation, and thus conserves the redox energy in a proton gradient. The sequence is that of NAD(P)H-quinone oxidoreductase subunit 3, chloroplastic from Brachypodium distachyon (Purple false brome).